An 81-amino-acid chain; its full sequence is MKAGIHPDYKKVVFMDTNTGFKFLSGSTKGSNETVEWEDGNTYPLLKVEISSDSHPFYTGRQKFATADGRVDRFNKKYGLK.

This sequence belongs to the bacterial ribosomal protein bL31 family. Type B subfamily. Part of the 50S ribosomal subunit.

This is Large ribosomal subunit protein bL31B from Bacillus anthracis (strain A0248).